A 212-amino-acid polypeptide reads, in one-letter code: ER lumen protein-retaining receptor (212 aa).

At 1–2 the chain is on the lumenal side; sequence MN. Residues 3–21 form a helical membrane-spanning segment; the sequence is IFRFAGDLSHVFAIIILLL. The Cytoplasmic segment spans residues 22-35; sequence KIWKTRSCAGISGK. A helical transmembrane segment spans residues 36 to 53; the sequence is SQILFAVVYLTRYLDLFT. Topologically, residues 54-61 are lumenal; that stretch reads TYVSLYNS. Residues 62 to 80 traverse the membrane as a helical segment; the sequence is VMKVLFLATSGATVYLMYV. Over 81-96 the chain is Cytoplasmic; sequence KFKATYDHNHDSFRIE. Residues 97 to 110 form a helical membrane-spanning segment; the sequence is FLLVPCALLSLVIN. Over 111–117 the chain is Lumenal; the sequence is HEFTVME. The chain crosses the membrane as a helical span at residues 118 to 137; sequence VLWTFSIYLESVAILPQLFL. The Cytoplasmic segment spans residues 138 to 149; it reads VSRTGEAESITS. A helical transmembrane segment spans residues 150–168; it reads HYLFALGSYRALYLLNWVY. Over 169–178 the chain is Lumenal; it reads RYMVESHYDL. A helical transmembrane segment spans residues 179–199; that stretch reads IAIFAGVVQTVLYCDFFYLYI. Topologically, residues 200–212 are cytoplasmic; sequence TKVLKGKKLQLPA.

The protein belongs to the ERD2 family.

Its subcellular location is the endoplasmic reticulum membrane. Required for the retention of luminal endoplasmic reticulum proteins. Determines the specificity of the luminal ER protein retention system. Also required for normal vesicular traffic through the Golgi. The chain is ER lumen protein-retaining receptor (KdelR) from Drosophila melanogaster (Fruit fly).